The chain runs to 787 residues: Putative pentatricopeptide repeat-containing protein At1g69350, mitochondrial (787 aa).

The N-terminal 16 residues, 1 to 16, are a transit peptide targeting the mitochondrion; sequence MTQYMPLFRSCSSLRL. PPR repeat units follow at residues 33–63, 64–98, 99–134, 135–165, 166–200, 201–235, 236–266, 267–301, 302–336, 338–368, 369–403, 404–434, 438–468, 469–503, 504–534, 538–568, 569–603, 604–638, and 639–669; these read DPLPVTKLIESYAFMGSPDSSRLVFEAFPYP, DSFMYGVLIKCNVWCHLLDAAIDLYHRLVSETTQI, SKFVFPSVLRACAGSREHLSVGGKVHGRIIKGGVDD, DAVIETSLLCMYGQTGNLSDAEKVFDGMPVR, DLVAWSTLVSSCLENGEVVKALRMFKCMVDDGVEP, DAVTMISVVEGCAELGCLRIARSVHGQITRKMFDL, DETLCNSLLTMYSKCGDLLSSERIFEKIAKK, NAVSWTAMISSYNRGEFSEKALRSFSEMIKSGIEP, NLVTLYSVLSSCGLIGLIREGKSVHGFAVRRELDP, YESLSLALVELYAECGKLSDCETVLRVVSDR, NIVAWNSLISLYAHRGMVIQALGLFRQMVTQRIKP, DAFTLASSISACENAGLVPLGKQIHGHVIRT, DEFVQNSLIDMYSKSGSVDSASTVFNQIKHR, SVVTWNSMLCGFSQNGNSVEAISLFDYMYHSYLEM, NEVTFLAVIQACSSIGSLEKGKWVHHKLIIS, DLFTDTALIDMYAKCGDLNAAETVFRAMSSR, SIVSWSSMINAYGMHGRIGSAISTFNQMVESGTKP, NEVVFMNVLSACGHSGSVEEGKYYFNLMKSFGVSP, and NSEHFACFIDLLSRSGDLKEAYRTIKEMPFL. The interval 674-749 is type E motif; sequence VWGSLVNGCR…VPGYSAIEID (76 aa). Residues 750–780 are type E(+) motif; it reads QKVFRFGAGEENRIQTDEIYRFLGNLQNLTN.

Belongs to the PPR family. PCMP-E subfamily.

The protein resides in the mitochondrion. This is Putative pentatricopeptide repeat-containing protein At1g69350, mitochondrial (PCMP-E66) from Arabidopsis thaliana (Mouse-ear cress).